The chain runs to 83 residues: Consomatin Rs1 (83 aa).

Residues 1–22 (MQTAYWVMVMMMVWITAPLSEG) form the signal peptide. A propeptide spanning residues 23–55 (GKLNNVIRGLVPDDVTPKRISQSLISRRRFDSR) is cleaved from the precursor. C62 and C67 form a disulfide bridge. Position 64 is a D-tryptophan (W64). P68 bears the 4-hydroxyproline mark. Residues 71 to 83 (LHGDNYDLKEKDK) constitute a propeptide that is removed on maturation.

Belongs to the conotoxin C superfamily. Consomatin family. Expressed by the venom duct.

The protein resides in the secreted. Moderately activates human somatostatin receptors (SSTR) with a preferential activation of SSTR1 and SSTR4. In vivo, does not cause behavioral changes in mice within a few minutes of intracranial injection, but causes a progressive loss of movement thereafter. Four to five hours after injection, mice recover, even with the highest dose tested. Shows antinociception and antihyperalgesia activities in two mouse models of acute pain, most probably by acting outside the central nervous system. The chain is Consomatin Rs1 from Conus raulsilvai (Sea snail).